Consider the following 95-residue polypeptide: UPF0213 protein PEPE_0875 (95 aa).

The 76-residue stretch at 7–82 folds into the GIY-YIG domain; the sequence is NGFYFYVLRC…KQRTRSSKIK (76 aa).

The protein belongs to the UPF0213 family.

The protein is UPF0213 protein PEPE_0875 of Pediococcus pentosaceus (strain ATCC 25745 / CCUG 21536 / LMG 10740 / 183-1w).